We begin with the raw amino-acid sequence, 180 residues long: ATP-dependent protease subunit HslV (180 aa).

Thr-5 is an active-site residue. Residues Gly-165, Cys-168, and Thr-171 each coordinate Na(+).

Belongs to the peptidase T1B family. HslV subfamily. A double ring-shaped homohexamer of HslV is capped on each side by a ring-shaped HslU homohexamer. The assembly of the HslU/HslV complex is dependent on binding of ATP.

The protein localises to the cytoplasm. The enzyme catalyses ATP-dependent cleavage of peptide bonds with broad specificity.. Its activity is regulated as follows. Allosterically activated by HslU binding. Its function is as follows. Protease subunit of a proteasome-like degradation complex believed to be a general protein degrading machinery. The polypeptide is ATP-dependent protease subunit HslV (Helicobacter pylori (strain G27)).